Reading from the N-terminus, the 80-residue chain is Cell division protein ZapB (80 aa).

Positions 3 to 80 (LEILEQLEAK…GLLGKMDEVE (78 aa)) form a coiled coil. Positions 41–60 (LEQANNGRSEVEQEAQRARD) are disordered. A compositionally biased stretch (basic and acidic residues) spans 49-60 (SEVEQEAQRARD).

This sequence belongs to the ZapB family. In terms of assembly, homodimer. The ends of the coiled-coil dimer bind to each other, forming polymers. Interacts with FtsZ.

It is found in the cytoplasm. Non-essential, abundant cell division factor that is required for proper Z-ring formation. It is recruited early to the divisome by direct interaction with FtsZ, stimulating Z-ring assembly and thereby promoting cell division earlier in the cell cycle. Its recruitment to the Z-ring requires functional FtsA or ZipA. In Aliivibrio fischeri (strain ATCC 700601 / ES114) (Vibrio fischeri), this protein is Cell division protein ZapB.